Reading from the N-terminus, the 184-residue chain is Crossover junction endodeoxyribonuclease RuvC (184 aa).

Catalysis depends on residues Asp7, Glu68, and Asp141. Positions 7, 68, and 141 each coordinate Mg(2+).

It belongs to the RuvC family. As to quaternary structure, homodimer which binds Holliday junction (HJ) DNA. The HJ becomes 2-fold symmetrical on binding to RuvC with unstacked arms; it has a different conformation from HJ DNA in complex with RuvA. In the full resolvosome a probable DNA-RuvA(4)-RuvB(12)-RuvC(2) complex forms which resolves the HJ. Mg(2+) serves as cofactor.

It localises to the cytoplasm. It carries out the reaction Endonucleolytic cleavage at a junction such as a reciprocal single-stranded crossover between two homologous DNA duplexes (Holliday junction).. The RuvA-RuvB-RuvC complex processes Holliday junction (HJ) DNA during genetic recombination and DNA repair. Endonuclease that resolves HJ intermediates. Cleaves cruciform DNA by making single-stranded nicks across the HJ at symmetrical positions within the homologous arms, yielding a 5'-phosphate and a 3'-hydroxyl group; requires a central core of homology in the junction. The consensus cleavage sequence is 5'-(A/T)TT(C/G)-3'. Cleavage occurs on the 3'-side of the TT dinucleotide at the point of strand exchange. HJ branch migration catalyzed by RuvA-RuvB allows RuvC to scan DNA until it finds its consensus sequence, where it cleaves and resolves the cruciform DNA. In Mycobacterium ulcerans (strain Agy99), this protein is Crossover junction endodeoxyribonuclease RuvC.